We begin with the raw amino-acid sequence, 319 residues long: Acetyl-coenzyme A carboxylase carboxyl transferase subunit beta (319 aa).

Positions 24-293 (LWIKCPDTGQ…MIEQEPEPSA (270 aa)) constitute a CoA carboxyltransferase N-terminal domain. The segment at 282–319 (PEMIEQEPEPSAPVPPDEPDEPAATQEAPPAAPAAPPA) is disordered.

This sequence belongs to the AccD/PCCB family. As to quaternary structure, acetyl-CoA carboxylase is a heterohexamer composed of biotin carboxyl carrier protein (AccB), biotin carboxylase (AccC) and two subunits each of ACCase subunit alpha (AccA) and ACCase subunit beta (AccD).

The protein resides in the cytoplasm. The enzyme catalyses N(6)-carboxybiotinyl-L-lysyl-[protein] + acetyl-CoA = N(6)-biotinyl-L-lysyl-[protein] + malonyl-CoA. The protein operates within lipid metabolism; malonyl-CoA biosynthesis; malonyl-CoA from acetyl-CoA: step 1/1. In terms of biological role, component of the acetyl coenzyme A carboxylase (ACC) complex. Biotin carboxylase (BC) catalyzes the carboxylation of biotin on its carrier protein (BCCP) and then the CO(2) group is transferred by the transcarboxylase to acetyl-CoA to form malonyl-CoA. The polypeptide is Acetyl-coenzyme A carboxylase carboxyl transferase subunit beta (Nitrobacter winogradskyi (strain ATCC 25391 / DSM 10237 / CIP 104748 / NCIMB 11846 / Nb-255)).